Reading from the N-terminus, the 238-residue chain is Pyruvate formate-lyase-activating enzyme (238 aa).

Residues 15–236 form the Radical SAM core domain; it reads VDGPGIRTVV…KKLEKYLKEL (222 aa). Residues Cys29, Cys33, and Cys36 each coordinate [4Fe-4S] cluster. S-adenosyl-L-methionine is bound by residues 35–37, Gly78, 126–128, and His199; these read YCH and DIK.

It belongs to the organic radical-activating enzymes family. Requires [4Fe-4S] cluster as cofactor.

The protein localises to the cytoplasm. The catalysed reaction is glycyl-[formate C-acetyltransferase] + reduced [flavodoxin] + S-adenosyl-L-methionine = glycin-2-yl radical-[formate C-acetyltransferase] + semiquinone [flavodoxin] + 5'-deoxyadenosine + L-methionine + H(+). In terms of biological role, activation of pyruvate formate-lyase under anaerobic conditions by generation of an organic free radical, using S-adenosylmethionine and reduced flavodoxin as cosubstrates to produce 5'-deoxy-adenosine. The polypeptide is Pyruvate formate-lyase-activating enzyme (act) (Clostridium pasteurianum).